Reading from the N-terminus, the 84-residue chain is Large ribosomal subunit protein bL27c (84 aa).

The disordered stretch occupies residues 1–23 (MAHKKGAGSTKNGRDSNAKRLGV).

It belongs to the bacterial ribosomal protein bL27 family.

It is found in the plastid. Its subcellular location is the chloroplast. In Thalassiosira pseudonana (Marine diatom), this protein is Large ribosomal subunit protein bL27c.